Consider the following 531-residue polypeptide: Flavin-containing monooxygenase 3 (531 aa).

Residues 9–13, E32, 40–41, and 61–62 each bind FAD; these read GAGVS, LW, and NS. Residues 60–61 and 195–198 contribute to the NADP(+) site; these read TN and SGCD. Residue S401 is modified to Phosphoserine. The chain crosses the membrane as a helical span at residues 511–531; it reads YSHFLRLLAVPVLIALFLVLI.

Belongs to the FMO family. The cofactor is FAD. Detected in liver and kidney (at protein level). Expressed in kidney and liver. Weakly expressed in lung. Does not seem to be expressed in brain, adipose tissue, or muscle.

It is found in the microsome membrane. The protein resides in the endoplasmic reticulum membrane. It catalyses the reaction trimethylamine + NADPH + O2 = trimethylamine N-oxide + NADP(+) + H2O. It carries out the reaction N,N-dimethylaniline + NADPH + O2 + H(+) = N,N-dimethylaniline N-oxide + NADP(+) + H2O. The catalysed reaction is hypotaurine + NADPH + O2 + H(+) = taurine + NADP(+) + H2O. The enzyme catalyses (S)-nicotine + NADPH + O2 = trans-(S)-nicotine N(1')-oxide + NADP(+) + H2O. It catalyses the reaction albendazole + NADPH + O2 + H(+) = albendazole S-oxide + NADP(+) + H2O. Its function is as follows. Essential hepatic enzyme that catalyzes the oxygenation of a wide variety of nitrogen- and sulfur-containing compounds including drugs as well as dietary compounds. Plays an important role in the metabolism of trimethylamine (TMA), via the production of trimethylamine N-oxide (TMAO) metabolite. TMA is generated by the action of gut microbiota using dietary precursors such as choline, choline containing compounds, betaine or L-carnitine. By regulating TMAO concentration, FMO3 directly impacts both platelet responsiveness and rate of thrombus formation. This is Flavin-containing monooxygenase 3 (Fmo3) from Rattus norvegicus (Rat).